Reading from the N-terminus, the 349-residue chain is Probable sugar phosphate/phosphate translocator At5g25400 (349 aa).

Transmembrane regions (helical) follow at residues 15–35, 49–69, 89–109, 113–133, 141–161, 165–185, 205–225, 236–256, 263–283, and 286–306; these read IIIS…VIVY, FPIS…FLLI, VVPI…AYIY, SFIQ…GVLF, ETMM…YGEA, VWGV…LVMI, VAPC…FPIL, LIFG…FLLV, TMNV…WSVI, and TVTP…AYYN. The EamA domain occupies 38 to 156; sequence YILDKKMYDW…LSISFGVAIA (119 aa). Positions 321–349 are disordered; sequence TAQQVDEETGRLLEEREGNEGGRKNEPED. Positions 328-349 are enriched in basic and acidic residues; the sequence is ETGRLLEEREGNEGGRKNEPED.

Belongs to the TPT transporter family. TPT (TC 2.A.7.9) subfamily.

The protein localises to the membrane. This Arabidopsis thaliana (Mouse-ear cress) protein is Probable sugar phosphate/phosphate translocator At5g25400.